Here is a 279-residue protein sequence, read N- to C-terminus: MDTELLKTFLEVSRTRHFGRAAESLYLTQSAVSFRIRQLENQLGVNLFTRHRNNIRLTAAGEKLLPYAETLMSTWQAARKEVAHTSRHNEFSIGASASLWECMLNQWLGRLYKNQDAHTGLQFEARIAQRQSLVKQLHERQLDLLITTEAPKMDEFSSQLLGYFTLALYTSAPSKLKGDLNYLRLEWGPDFQQHEAGLIGADEVPILTTSSAELAQQQIAMLNGCTWLPVSWARKKGGLHTVVDSTTLSRPLYAIWLQNSDKNALIRDLLKINVLDEVY.

Residues 1-58 (MDTELLKTFLEVSRTRHFGRAAESLYLTQSAVSFRIRQLENQLGVNLFTRHRNNIRLT) form the HTH lysR-type domain. The segment at residues 18-37 (FGRAAESLYLTQSAVSFRIR) is a DNA-binding region (H-T-H motif).

It belongs to the LysR transcriptional regulatory family.

Negatively regulates the transcription of the flagellar master operon flhDC by binding to the upstream region of the operon. The chain is HTH-type transcriptional regulator HdfR from Escherichia coli O7:K1 (strain IAI39 / ExPEC).